The following is a 117-amino-acid chain: Large ribosomal subunit protein bL20 (117 aa).

The protein belongs to the bacterial ribosomal protein bL20 family.

In terms of biological role, binds directly to 23S ribosomal RNA and is necessary for the in vitro assembly process of the 50S ribosomal subunit. It is not involved in the protein synthesizing functions of that subunit. This is Large ribosomal subunit protein bL20 from Mesomycoplasma hyopneumoniae (strain 7448) (Mycoplasma hyopneumoniae).